Consider the following 670-residue polypeptide: Solute carrier organic anion transporter family member 1A5 (670 aa).

Topologically, residues 1–20 (MGETEKRIATHGVRCFSKIK) are cytoplasmic. The helical transmembrane segment at 21-40 (MFLLALTCAYVSKSLSGIYM) threads the bilayer. The Extracellular segment spans residues 41–59 (NSMLTQIERQFDIPTSIVG). The helical transmembrane segment at 60–80 (LINGSFEIGNLLLIILVSYFG) threads the bilayer. The Cytoplasmic portion of the chain corresponds to 81–86 (TKLHRP). Residues 87–111 (IMIGIGCVIMGLGCFLMSLPHFLMG) form a helical membrane-spanning segment. The Extracellular portion of the chain corresponds to 112-155 (RYEYETTISPTSNLSSNSFLCMENRTQTLKPTQDPAECVKEMKS). Residues Asn124 and Asn135 are each glycosylated (N-linked (GlcNAc...) asparagine). Residues 156–184 (LMWIYVLVGNIIRGIGETPIMPLGISYIE) form a helical membrane-spanning segment. Topologically, residues 185 to 203 (DFAKSENSPLYIGILESGK) are cytoplasmic. The chain crosses the membrane as a helical span at residues 204-224 (MIGPIVGLLLGSFCARIYVDT). Residues 225-242 (GSVNTDDLTITPTDTRWV) lie on the Extracellular side of the membrane. Residues 243–267 (GAWWIGFLVCAGVNILTSIPFFFFP) traverse the membrane as a helical segment. Residues 268–311 (KTLPKEGLQDNVARTENDKEEKHREKAKEENRGITKDFLPFMKS) lie on the Cytoplasmic side of the membrane. The helical transmembrane segment at 312-333 (LSCNPIYMLLILTSVLQINAFI) threads the bilayer. The Extracellular portion of the chain corresponds to 334–353 (NMFTFLPKYLEQQYGKSTSE). The chain crosses the membrane as a helical span at residues 354-377 (VVLLIGVCNLPPICIGYLLIGFIM). Over 378–381 (KKFR) the chain is Cytoplasmic. The chain crosses the membrane as a helical span at residues 382–405 (ITVKKAAYMAFCLSLFEYLLSYFH). The Extracellular segment spans residues 406–513 (FMISCDNFQV…PECANKLQYF (108 aa)). The region spanning 433–488 (NKVLADCNTRCSCLTNTWDPVCGDNGLSYMSACLAGCEKSVGMGTHMVFQNCSCIQ) is the Kazal-like domain. Intrachain disulfides connect Cys439-Cys469, Cys445-Cys465, and Cys454-Cys486. Residues Asn483 and Asn492 are each glycosylated (N-linked (GlcNAc...) asparagine). Residues 514–536 (LIMSVIGSFIYSITAIPGYMVLL) form a helical membrane-spanning segment. Topologically, residues 537–545 (RCIKSEEKS) are cytoplasmic. The helical transmembrane segment at 546–571 (LGIGLHAFCTRIFAGIPAPIYFGALI) threads the bilayer. Residues 572 to 605 (DRTCLHWGTLKCGEPGACRIYNINNFRRIYLVLP) are Extracellular-facing. A helical membrane pass occupies residues 606–623 (AALRGSSYLPAFFILILM). At 624-670 (RKFQLPGEMYSSETELADMKQTVKKSECTDVHGIPKVENDGELKTKL) the chain is on the cytoplasmic side.

It belongs to the organo anion transporter (TC 2.A.60) family. As to expression, expressed in brain, choroid plexus and lung, but not in liver or kidney.

Its subcellular location is the cell membrane. It is found in the basal cell membrane. It carries out the reaction taurocholate(out) = taurocholate(in). The enzyme catalyses glycocholate(out) = glycocholate(in). It catalyses the reaction taurochenodeoxycholate(out) = taurochenodeoxycholate(in). The catalysed reaction is tauroursodeoxycholate(out) = tauroursodeoxycholate(in). It carries out the reaction 3,3',5'-triiodo-L-thyronine(out) = 3,3',5'-triiodo-L-thyronine(in). The enzyme catalyses L-thyroxine(out) = L-thyroxine(in). It catalyses the reaction taurodeoxycholate(out) = taurodeoxycholate(in). The catalysed reaction is glycodeoxycholate(out) = glycodeoxycholate(in). It carries out the reaction glycochenodeoxycholate(out) = glycochenodeoxycholate(in). The enzyme catalyses glycoursodeoxycholate(out) = glycoursodeoxycholate(in). It catalyses the reaction estrone 3-sulfate(out) = estrone 3-sulfate(in). The catalysed reaction is prostaglandin E2(out) = prostaglandin E2(in). It carries out the reaction substance P(out) = substance P(in). Functionally, na(+)-independent transporter that mediates the cellular uptake of a broad range of organic anions such as the endogenous bile salts cholate and deoxycholate, either in their unconjugated or conjugated forms (taurocholate and glycocholate), estrone 3-sulfate and prostaglandin E2, at the plasma membrane. Responsible for intestinal absorption of bile acids. Capable of thyroid hormone transport (both T3 or 3,3',5'-triiodo-L-thyronine, and T4 or L-tyroxine). Plays roles in blood-brain and -cerebrospinal fluid barrier transport of organic anions and signal mediators, and in hormone uptake by neural cells. May also play a role in the reuptake of neuropeptides such as substance P/TAC1 and vasoactive intestinal peptide/VIP released from retinal neurons. Shows a pH-sensitive substrate specificity which may be ascribed to the protonation state of the binding site and leads to a stimulation of substrate transport in an acidic microenvironment. Hydrogencarbonate/HCO3(-) acts as the probable counteranion that exchanges for organic anions. May contribute to regulate the transport of organic compounds in testis across the blood-testis-barrier. The chain is Solute carrier organic anion transporter family member 1A5 (Slco1a5) from Mus musculus (Mouse).